The primary structure comprises 1013 residues: Adhesion G-protein coupled receptor G2 (1013 aa).

An N-terminal signal peptide occupies residues 1 to 37; it reads MLFSGGQYSPVGRPEEVLLIYKIFLVIICFHAILVTS. The Extracellular segment spans residues 38–623; it reads LKENAGNSSL…TSLPPSQMMA (586 aa). N-linked (GlcNAc...) asparagine glycans are attached at residues N44, N78, N92, N104, N128, N137, N155, N179, N187, N366, N431, N452, N457, N524, N538, N543, N547, and N593. Residues 457 to 615 enclose the GAIN-B domain; sequence NTTTFAAQDP…GILLDLSRTS (159 aa). 2 cysteine pairs are disulfide-bonded: C566-C597 and C585-C599. The segment at 566–615 is GPS; it reads CVFWDLNRNGGRGGWSSDGCSVKEKRMNETICTCSHLTSFGILLDLSRTS. The segment at 604 to 615 is stachel; it reads SFGILLDLSRTS. The helical transmembrane segment at 624 to 644 threads the bilayer; the sequence is LTFITYIGCGLSSIFLSVTLV. The Cytoplasmic segment spans residues 645–663; the sequence is TYIAFEKIRRDYPSKILIQ. A helical membrane pass occupies residues 664-684; sequence LCAALLLLNLVFLLDSWIALY. Topologically, residues 685-688 are extracellular; the sequence is NARG. Residues 689–709 form a helical membrane-spanning segment; sequence FCISVAVFLHYFLLVSFTWMG. C690 and C774 are oxidised to a cystine. Residues 710 to 733 lie on the Cytoplasmic side of the membrane; it reads LEAFHMYLALVKVFNTYIRKYILK. Residues 734–754 traverse the membrane as a helical segment; the sequence is FCIVGWGIPAVVVSIVLTISP. Topologically, residues 755–785 are extracellular; it reads DNYGIGSYGKFPNGTPDDFCWINSSVVFYIT. N777 carries an N-linked (GlcNAc...) asparagine glycan. Residues 786 to 806 traverse the membrane as a helical segment; that stretch reads VVGYFCVIFLLNVSMFIVVLV. Residues 807–830 lie on the Cytoplasmic side of the membrane; that stretch reads QLCRIKKKKQLGAQRKTSIQDLRS. The chain crosses the membrane as a helical span at residues 831–851; it reads IAGLTFLLGITWGFAFFAWGP. The Extracellular portion of the chain corresponds to 852-853; it reads VN. A glycan (N-linked (GlcNAc...) asparagine) is linked at N853. The helical transmembrane segment at 854 to 874 threads the bilayer; it reads LTFMYLFAIFNTLQGFFIFIF. A 3beta-hydroxyandrost-5-en-17-one-binding site is contributed by N864. The Cytoplasmic portion of the chain corresponds to 875 to 1013; that stretch reads YCAAKENVRK…RGSLHFIEQM (139 aa). S1006 is modified (phosphoserine).

The protein belongs to the G-protein coupled receptor 2 family. Adhesion G-protein coupled receptor (ADGR) subfamily. Heterodimer of 2 chains generated by proteolytic processing; the large extracellular N-terminal fragment and the membrane-bound C-terminal fragment predominantly remain associated and non-covalently linked. Interacts with CFTR. Post-translationally, proteolytically cleaved into 2 subunits, an extracellular subunit and a seven-transmembrane subunit. In terms of processing, highly glycosylated. As to expression, epididymis-specific expression (at protein level). Associated with apical membranes of efferent ductule and proximal epididymal duct epithelia.

Its subcellular location is the apical cell membrane. Its activity is regulated as follows. Forms a heterodimer of 2 chains generated by proteolytic processing that remain associated through non-covalent interactions mediated by the GAIN-B domain. In the inactivated receptor, the Stachel sequence (also named stalk) is embedded in the GAIN-B domain, where it adopts a beta-strand conformation. On activation, the Stachel moves into the 7 transmembrane region and adopts a twisted hook-shaped configuration that forms contacts within the receptor, leading to coupling of a G-alpha protein, which activates signaling. The cleaved GAIN-B and N-terminal domains can then dissociate from the rest of the receptor. Deoxycorticosterone (DOC) acts as an antagonist of ADGRG2. In terms of biological role, adhesion G-protein coupled receptor (aGPCR) for steroid hormones, such as dehydroepiandrosterone (DHEA; also named 3beta-hydroxyandrost-5-en-17-one) and androstenedione. Involved in a signal transduction pathway controlling epididymal function and male fertility. Ligand binding causes a conformation change that triggers signaling via guanine nucleotide-binding proteins (G proteins) and modulates the activity of downstream effectors, such as adenylate cyclase. ADGRG2 is coupled to G(s) G proteins and mediates activation of adenylate cyclase activity. Also able to couple with G(q) G proteins in vitro. May regulate fluid exchange within epididymis. This is Adhesion G-protein coupled receptor G2 from Rattus norvegicus (Rat).